The following is a 90-amino-acid chain: Putative defensin-like protein 64 (90 aa).

A signal peptide spans 1 to 23 (MWGRQIVLKIFFLVLSCVIVIET). Disulfide bonds link Cys-33-Cys-56 and Cys-42-Cys-77.

The protein belongs to the DEFL family.

Its subcellular location is the secreted. The chain is Putative defensin-like protein 64 from Arabidopsis thaliana (Mouse-ear cress).